Reading from the N-terminus, the 562-residue chain is Potassium-transporting ATPase potassium-binding subunit (562 aa).

The next 10 membrane-spanning stretches (helical) occupy residues 5–25 (AFLLIFGLLLTVLIVAQPLGS), 63–83 (AAAILALNLIGIVVLFVLLMA), 132–152 (GLTVQNFLSAASGIAVAFALI), 175–195 (LYVLLPLSLLLALFFVSQGVL), 250–270 (LSNIVQMLAILLIPTALCFAF), 279–299 (QGHALLWAMALIFIVAAAVVM), 379–399 (GLYGMLLFVLLTVFIAGLMIG), 416–436 (MTALAILIPPALVLLGTALAL), 483–503 (VLLAVAMLLGRFAVMVPVLAI), and 526–546 (LFIGMLIAIVLLIGALTFIPA).

The protein belongs to the KdpA family. The system is composed of three essential subunits: KdpA, KdpB and KdpC.

The protein localises to the cell inner membrane. In terms of biological role, part of the high-affinity ATP-driven potassium transport (or Kdp) system, which catalyzes the hydrolysis of ATP coupled with the electrogenic transport of potassium into the cytoplasm. This subunit binds the periplasmic potassium ions and delivers the ions to the membrane domain of KdpB through an intramembrane tunnel. This is Potassium-transporting ATPase potassium-binding subunit from Pectobacterium atrosepticum (strain SCRI 1043 / ATCC BAA-672) (Erwinia carotovora subsp. atroseptica).